The chain runs to 548 residues: Esterase-5A (548 aa).

Positions 1–19 are cleaved as a signal peptide; that stretch reads MHLVRWLICLIQLWIQLGA. Cys-87 and Cys-106 are disulfide-bonded. N-linked (GlcNAc...) asparagine glycosylation is found at Asn-95 and Asn-116. Catalysis depends on Ser-210, which acts as the Acyl-ester intermediate. A disulfide bridge connects residues Cys-262 and Cys-274. An N-linked (GlcNAc...) asparagine glycan is attached at Asn-479. A disulfide bridge links Cys-518 with Cys-539.

Belongs to the type-B carboxylesterase/lipase family.

It localises to the secreted. The enzyme catalyses a carboxylic ester + H2O = an alcohol + a carboxylate + H(+). The protein is Esterase-5A (Est-5A) of Drosophila persimilis (Fruit fly).